The chain runs to 511 residues: Exodeoxyribonuclease 7 large subunit (511 aa).

The protein belongs to the XseA family. As to quaternary structure, heterooligomer composed of large and small subunits.

It is found in the cytoplasm. The catalysed reaction is Exonucleolytic cleavage in either 5'- to 3'- or 3'- to 5'-direction to yield nucleoside 5'-phosphates.. In terms of biological role, bidirectionally degrades single-stranded DNA into large acid-insoluble oligonucleotides, which are then degraded further into small acid-soluble oligonucleotides. The chain is Exodeoxyribonuclease 7 large subunit from Brucella canis (strain ATCC 23365 / NCTC 10854 / RM-666).